Reading from the N-terminus, the 231-residue chain is Ribose-5-phosphate isomerase A (231 aa).

Residues T28 to T31, D83 to D86, and K96 to G99 contribute to the substrate site. The Proton acceptor role is filled by E105. K123 is a binding site for substrate.

It belongs to the ribose 5-phosphate isomerase family. In terms of assembly, homodimer.

It carries out the reaction aldehydo-D-ribose 5-phosphate = D-ribulose 5-phosphate. The protein operates within carbohydrate degradation; pentose phosphate pathway; D-ribose 5-phosphate from D-ribulose 5-phosphate (non-oxidative stage): step 1/1. In terms of biological role, catalyzes the reversible conversion of ribose-5-phosphate to ribulose 5-phosphate. The polypeptide is Ribose-5-phosphate isomerase A (Agrobacterium fabrum (strain C58 / ATCC 33970) (Agrobacterium tumefaciens (strain C58))).